The following is a 333-amino-acid chain: Phosphate acyltransferase (333 aa).

This sequence belongs to the PlsX family. In terms of assembly, homodimer. Probably interacts with PlsY.

It is found in the cytoplasm. It catalyses the reaction a fatty acyl-[ACP] + phosphate = an acyl phosphate + holo-[ACP]. It functions in the pathway lipid metabolism; phospholipid metabolism. Functionally, catalyzes the reversible formation of acyl-phosphate (acyl-PO(4)) from acyl-[acyl-carrier-protein] (acyl-ACP). This enzyme utilizes acyl-ACP as fatty acyl donor, but not acyl-CoA. This chain is Phosphate acyltransferase, found in Desulforamulus reducens (strain ATCC BAA-1160 / DSM 100696 / MI-1) (Desulfotomaculum reducens).